The chain runs to 211 residues: Holliday junction branch migration complex subunit RuvA (211 aa).

Positions Met1–Lys63 are domain I. The segment at Asp64–Ala142 is domain II. The segment at Val143–Ala157 is flexible linker. The interval Val158–Lys211 is domain III.

This sequence belongs to the RuvA family. In terms of assembly, homotetramer. Forms an RuvA(8)-RuvB(12)-Holliday junction (HJ) complex. HJ DNA is sandwiched between 2 RuvA tetramers; dsDNA enters through RuvA and exits via RuvB. An RuvB hexamer assembles on each DNA strand where it exits the tetramer. Each RuvB hexamer is contacted by two RuvA subunits (via domain III) on 2 adjacent RuvB subunits; this complex drives branch migration. In the full resolvosome a probable DNA-RuvA(4)-RuvB(12)-RuvC(2) complex forms which resolves the HJ.

Its subcellular location is the cytoplasm. Its function is as follows. The RuvA-RuvB-RuvC complex processes Holliday junction (HJ) DNA during genetic recombination and DNA repair, while the RuvA-RuvB complex plays an important role in the rescue of blocked DNA replication forks via replication fork reversal (RFR). RuvA specifically binds to HJ cruciform DNA, conferring on it an open structure. The RuvB hexamer acts as an ATP-dependent pump, pulling dsDNA into and through the RuvAB complex. HJ branch migration allows RuvC to scan DNA until it finds its consensus sequence, where it cleaves and resolves the cruciform DNA. The protein is Holliday junction branch migration complex subunit RuvA of Corynebacterium jeikeium (strain K411).